A 228-amino-acid chain; its full sequence is Glutamate transport system permease protein GluC (228 aa).

The next 4 membrane-spanning stretches (helical) occupy residues 16–36 (FWVT…LGTI), 64–84 (LTLV…LTLA), 100–120 (AVLG…RSGI), and 195–215 (LFVV…PMGL). The ABC transmembrane type-1 domain maps to 16 to 217 (FWVTIQLTVY…ILTLPMGLGL (202 aa)).

Belongs to the binding-protein-dependent transport system permease family. HisMQ subfamily. The complex is composed of two ATP-binding proteins (GluA), two transmembrane proteins (GluC and GluD) and a solute-binding protein (GluB).

The protein localises to the cell membrane. Functionally, part of the ABC transporter complex GluABCD involved in glutamate uptake. Probably responsible for the translocation of the substrate across the membrane. The sequence is that of Glutamate transport system permease protein GluC from Corynebacterium efficiens (strain DSM 44549 / YS-314 / AJ 12310 / JCM 11189 / NBRC 100395).